Consider the following 479-residue polypeptide: Ribosomal RNA small subunit methyltransferase F (479 aa).

Residues 125-131, E149, D176, and D194 contribute to the S-adenosyl-L-methionine site; that span reads AAAPGSK. Residue C247 is the Nucleophile of the active site.

It belongs to the class I-like SAM-binding methyltransferase superfamily. RsmB/NOP family.

The protein resides in the cytoplasm. The catalysed reaction is cytidine(1407) in 16S rRNA + S-adenosyl-L-methionine = 5-methylcytidine(1407) in 16S rRNA + S-adenosyl-L-homocysteine + H(+). Its function is as follows. Specifically methylates the cytosine at position 1407 (m5C1407) of 16S rRNA. The protein is Ribosomal RNA small subunit methyltransferase F of Escherichia coli O81 (strain ED1a).